A 78-amino-acid chain; its full sequence is Large ribosomal subunit protein eL20 (78 aa).

It belongs to the eukaryotic ribosomal protein eL20 family. In terms of assembly, part of the 50S ribosomal subunit. Binds 23S rRNA.

In Pyrobaculum arsenaticum (strain DSM 13514 / JCM 11321 / PZ6), this protein is Large ribosomal subunit protein eL20.